An 851-amino-acid polypeptide reads, in one-letter code: Probable alpha,alpha-trehalose-phosphate synthase [UDP-forming] 7 (851 aa).

Phosphoserine is present on Ser5. Position 32 is a phosphothreonine (Thr32). A glycosyltransferase region spans residues 59–540; that stretch reads DRMIIVANRL…SRSFLQDLER (482 aa).

The protein in the N-terminal section; belongs to the glycosyltransferase 20 family. It in the C-terminal section; belongs to the trehalose phosphatase family. Binds to the phosphopeptide-binding site of GRF/14-3-3. In terms of processing, phosphorylated. As to expression, expressed in seedlings, leaves, roots, stems, flowers and siliques.

It catalyses the reaction D-glucose 6-phosphate + UDP-alpha-D-glucose = alpha,alpha-trehalose 6-phosphate + UDP + H(+). In Arabidopsis thaliana (Mouse-ear cress), this protein is Probable alpha,alpha-trehalose-phosphate synthase [UDP-forming] 7 (TPS7).